A 115-amino-acid polypeptide reads, in one-letter code: uncharacterized protein (115 aa).

The signal sequence occupies residues 1-24 (MLPLCLTFLSFFLSLGGSFKAVMT). The next 2 helical transmembrane spans lie at 39–59 (FWIF…ALAI) and 93–113 (YLTS…FLLS).

Its subcellular location is the membrane. This is an uncharacterized protein from Saccharomyces cerevisiae (strain ATCC 204508 / S288c) (Baker's yeast).